The chain runs to 2662 residues: Centrosome-associated protein CEP250L1 (2662 aa).

Coiled-coil stretches lie at residues 1030 to 1248 and 1281 to 1719; these read KVHY…EEEE and ARTH…IDAQ.

It is found in the cytoplasm. It localises to the cytoskeleton. The protein resides in the microtubule organizing center. Its subcellular location is the centrosome. Part of the centrosome inner core complex. Plays a role in the formation and/or stabilization of the mitotic spindle. Required for proper nuclear segregation and DNA partitioning during cell division. This Toxoplasma gondii (strain ATCC 50611 / Me49) protein is Centrosome-associated protein CEP250L1.